Here is a 771-residue protein sequence, read N- to C-terminus: Glucocorticoid receptor (771 aa).

Positions 1–415 (MDLKESVTSS…STTTGPPPKL (415 aa)) are modulating. Position 8 is a phosphothreonine (Thr8). Arg22 is subject to Omega-N-methylarginine. Ser44, Ser133, Ser199, Ser207, and Ser222 each carry phosphoserine. Residues 129 to 172 (SRSTSVPENPKNSASAVSGTPTEEFPKTQSDLSSEQENLKSQAG) show a composition bias toward polar residues. The disordered stretch occupies residues 129–184 (SRSTSVPENPKNSASAVSGTPTEEFPKTQSDLSSEQENLKSQAGTNGGNVKFPPDQ). Residue Lys254 forms a Glycyl lysine isopeptide (Lys-Gly) (interchain with G-Cter in SUMO2) linkage. The residue at position 263 (Ser263) is a Phosphoserine. Glycyl lysine isopeptide (Lys-Gly) (interchain with G-Cter in SUMO); alternate cross-links involve residues Lys273 and Lys289. Glycyl lysine isopeptide (Lys-Gly) (interchain with G-Cter in SUMO2); alternate cross-links involve residues Lys273 and Lys289. Ser303 and Ser400 each carry phosphoserine. A disordered region spans residues 390–411 (SSPGLRPDVSSPPSSSSTTTGP). A compositionally biased stretch (low complexity) spans 400-409 (SPPSSSSTTT). A Glycyl lysine isopeptide (Lys-Gly) (interchain with G-Cter in ubiquitin) cross-link involves residue Lys414. 2 NR C4-type zinc fingers span residues 416–436 (CLVC…CGSC) and 452–476 (CAGR…YRKC). The segment at residues 416–481 (CLVCSDELSG…RYRKCLQAGM (66 aa)) is a DNA-binding region (nuclear receptor). Residues Lys475, Lys487, Lys489, and Lys490 each carry the N6-acetyllysine modification. An interaction with CLOCK region spans residues 480–771 (GMNLQARKTK…DIKKLLFHQK (292 aa)). The segment at 482-517 (NLQARKTKKKIKGIQQATTGVSQNTSENPNKTIVPA) is hinge. One can recognise an NR LBD domain in the interval 518 to 752 (TLPQLTPTLV…FPEMLAEIIT (235 aa)). The interval 526–691 (LVSLLEVIEP…EIRMTYIKEL (166 aa)) is interaction with CRY1. Lys697 participates in a covalent cross-link: Glycyl lysine isopeptide (Lys-Gly) (interchain with G-Cter in SUMO).

It belongs to the nuclear hormone receptor family. NR3 subfamily. Heteromultimeric cytoplasmic complex with HSP90AA1, HSPA1A/HSPA1B, and FKBP5 or another immunophilin such as PPID, STIP1, or the immunophilin homolog PPP5C. Upon ligand binding FKBP5 dissociates from the complex and FKBP4 takes its place, thereby linking the complex to dynein and mediating transport to the nucleus, where the complex dissociates. Probably forms a complex composed of chaperones HSP90 and HSP70, co-chaperones CDC37, PPP5C, TSC1 and client protein TSC2, CDK4, AKT, RAF1 and NR3C1; this complex does not contain co-chaperones STIP1/HOP and PTGES3/p23. Directly interacts with UNC45A. Binds to DNA as a homodimer, and as heterodimer with NR3C2 or the retinoid X receptor. Binds STAT5A and STAT5B homodimers and heterodimers. Interacts with NRIP1, POU2F1, POU2F2 and TRIM28. Interacts with several coactivator complexes, including the SMARCA4 complex, CREBBP/EP300, TADA2L (Ada complex) and p160 coactivators such as NCOA2 and NCOA6. Interaction with BAG1 inhibits transactivation. Interacts with HEXIM1 and TGFB1I1. Interacts with NCOA1. Interacts with NCOA3, SMARCA4, SMARCC1, SMARCD1, and SMARCE1. Interacts with CLOCK, CRY1 and CRY2 in a ligand-dependent fashion. Interacts with CIART. Interacts with RWDD3. Interacts with UBE2I/UBC9 and this interaction is enhanced in the presence of RWDD3. Interacts with GRIP1. Interacts with NR4A3 (via nuclear receptor DNA-binding domain), represses transcription activity of NR4A3 on the POMC promoter Nur response element (NurRE). Directly interacts with PNRC2 to attract and form a complex with UPF1 and DCP1A; the interaction leads to rapid mRNA degradation. Interacts with GSK3B. Interacts with FNIP1 and FNIP2. Interacts (via C-terminus) with HNRNPU (via C-terminus). Interacts with MCM3AP. Interacts (via domain NR LBD) with HSP90AA1 and HSP90AB1. In the absence of hormonal ligand, interacts with TACC1. Interacts (via NR LBD domain) with ZNF764 (via KRAB domain); the interaction regulates transcription factor activity of NR3C1 by directing its actions toward certain biologic pathways. Post-translationally, acetylation by CLOCK reduces its binding to glucocorticoid response elements and its transcriptional activity. In terms of processing, increased proteasome-mediated degradation in response to glucocorticoids. Phosphorylated in the absence of hormone; becomes hyperphosphorylated in the presence of glucocorticoid. The Ser-199, Ser-222 and Ser-400-phosphorylated forms are mainly cytoplasmic, and the Ser-207-phosphorylated form is nuclear. Phosphorylation at Ser-207 increases transcriptional activity. Phosphorylation at Ser-199, Ser-222 and Ser-400 decreases signaling capacity. Phosphorylation at Ser-400 may protect from glucocorticoid-induced apoptosis. Phosphorylation at Ser-199 and Ser-207 is not required in regulation of chromosome segregation. May be dephosphorylated by PPP5C, attenuates NR3C1 action. Post-translationally, ubiquitinated by UBR5, leading to its degradation: UBR5 specifically recognizes and binds ligand-bound NR3C1 when it is not associated with coactivators (NCOAs). In presence of NCOAs, the UBR5-degron is not accessible, preventing its ubiquitination and degradation. In terms of processing, sumoylation at Lys-273 and Lys-289 negatively regulates its transcriptional activity. Sumoylation at Lys-697 positively regulates its transcriptional activity in the presence of RWDD3. Sumoylation at Lys-273 and Lys-289 is dispensable whereas sumoylation at Lys-697 is critical for the stimulatory effect of RWDD3 on its transcriptional activity. Heat shock increases sumoylation in a RWDD3-dependent manner.

The protein localises to the cytoplasm. It is found in the nucleus. Its subcellular location is the mitochondrion. The protein resides in the cytoskeleton. It localises to the spindle. The protein localises to the microtubule organizing center. It is found in the centrosome. Its subcellular location is the chromosome. The protein resides in the nucleoplasm. In terms of biological role, receptor for glucocorticoids (GC). Has a dual mode of action: as a transcription factor that binds to glucocorticoid response elements (GRE), both for nuclear and mitochondrial DNA, and as a modulator of other transcription factors. Affects inflammatory responses, cellular proliferation and differentiation in target tissues. Involved in chromatin remodeling. Plays a role in rapid mRNA degradation by binding to the 5' UTR of target mRNAs and interacting with PNRC2 in a ligand-dependent manner which recruits the RNA helicase UPF1 and the mRNA-decapping enzyme DCP1A, leading to RNA decay. Could act as a coactivator for STAT5-dependent transcription upon growth hormone (GH) stimulation and could reveal an essential role of hepatic GR in the control of body growth. Mediates glucocorticoid-induced apoptosis. Promotes accurate chromosome segregation during mitosis. May act as a tumor suppressor. May play a negative role in adipogenesis through the regulation of lipolytic and antilipogenic gene expression. In Cavia porcellus (Guinea pig), this protein is Glucocorticoid receptor (NR3C1).